A 92-amino-acid polypeptide reads, in one-letter code: Acylphosphatase (92 aa).

The region spanning Ala-4–Gly-92 is the Acylphosphatase-like domain. Catalysis depends on residues Arg-19 and Asn-37.

The protein belongs to the acylphosphatase family.

It carries out the reaction an acyl phosphate + H2O = a carboxylate + phosphate + H(+). The sequence is that of Acylphosphatase (acyP) from Latilactobacillus sakei subsp. sakei (strain 23K) (Lactobacillus sakei subsp. sakei).